We begin with the raw amino-acid sequence, 227 residues long: Orotate phosphoribosyltransferase (227 aa).

A 5-phospho-alpha-D-ribose 1-diphosphate-binding site is contributed by lysine 34. 42 to 43 (FF) is an orotate binding site. Residues 80 to 81 (YK), arginine 106, lysine 107, lysine 110, histidine 112, and 131 to 139 (DDVISAGTS) each bind 5-phospho-alpha-D-ribose 1-diphosphate. Orotate-binding residues include serine 135 and arginine 163.

The protein belongs to the purine/pyrimidine phosphoribosyltransferase family. PyrE subfamily. Homodimer. Mg(2+) serves as cofactor.

It carries out the reaction orotidine 5'-phosphate + diphosphate = orotate + 5-phospho-alpha-D-ribose 1-diphosphate. It participates in pyrimidine metabolism; UMP biosynthesis via de novo pathway; UMP from orotate: step 1/2. Catalyzes the transfer of a ribosyl phosphate group from 5-phosphoribose 1-diphosphate to orotate, leading to the formation of orotidine monophosphate (OMP). This is Orotate phosphoribosyltransferase from Cupriavidus necator (strain ATCC 17699 / DSM 428 / KCTC 22496 / NCIMB 10442 / H16 / Stanier 337) (Ralstonia eutropha).